Here is a 138-residue protein sequence, read N- to C-terminus: Large ribosomal subunit protein uL11c (138 aa).

Belongs to the universal ribosomal protein uL11 family. As to quaternary structure, part of the ribosomal stalk of the 50S ribosomal subunit. Interacts with L10 and the large rRNA to form the base of the stalk. L10 forms an elongated spine to which L12 dimers bind in a sequential fashion forming a multimeric L10(L12)X complex.

It is found in the plastid. Its subcellular location is the chloroplast. Its function is as follows. Forms part of the ribosomal stalk which helps the ribosome interact with GTP-bound translation factors. This is Large ribosomal subunit protein uL11c from Cyanidioschyzon merolae (strain NIES-3377 / 10D) (Unicellular red alga).